Reading from the N-terminus, the 468-residue chain is 6-phospho-beta-galactosidase (468 aa).

5 residues coordinate D-galactose 6-phosphate: Q19, H116, N159, E160, and N297. The active-site Proton donor is E160. E375 (nucleophile) is an active-site residue. The D-galactose 6-phosphate site is built by S428, W429, K435, and Y437.

This sequence belongs to the glycosyl hydrolase 1 family.

The enzyme catalyses a 6-phospho-beta-D-galactoside + H2O = D-galactose 6-phosphate + an alcohol. It functions in the pathway carbohydrate metabolism; lactose degradation; D-galactose 6-phosphate and beta-D-glucose from lactose 6-phosphate: step 1/1. The protein is 6-phospho-beta-galactosidase of Streptococcus agalactiae serotype III (strain NEM316).